Consider the following 214-residue polypeptide: Heat shock protein 26 (214 aa).

An N-acetylserine modification is found at S2. The residue at position 42 (T42) is a Phosphothreonine. Positions 86–207 (GFPRSVAVPV…KNHVKKIEVS (122 aa)) constitute a sHSP domain. At S90 the chain carries Phosphoserine. The residue at position 163 (T163) is a Phosphothreonine. The interval 192 to 214 (KPQKDGKNHVKKIEVSSQESWGN) is disordered. The span at 193 to 205 (PQKDGKNHVKKIE) shows a compositional bias: basic and acidic residues. Residues S208 and S211 each carry the phosphoserine modification.

This sequence belongs to the small heat shock protein (HSP20) family. As to quaternary structure, present in large complexes.

Not known. One of the major polypeptides produced on heat shock. This chain is Heat shock protein 26 (HSP26), found in Saccharomyces cerevisiae (strain ATCC 204508 / S288c) (Baker's yeast).